The following is a 451-amino-acid chain: Gamma-aminobutyric acid receptor subunit alpha-2 (451 aa).

An N-terminal signal peptide occupies residues 1–28 (MRTKLSTCNVWFPLLVLLVWNPARLVLA). The Extracellular segment spans residues 29–249 (NIQEDEAKNN…MTAHFHLKRK (221 aa)). A glycan (N-linked (GlcNAc...) asparagine) is linked at Asn38. Position 94 (Arg94) interacts with 4-aminobutanoate. N-linked (GlcNAc...) asparagine glycosylation is found at Asn114 and Asn138. Thr157 is a 4-aminobutanoate binding site. Cysteines 166 and 180 form a disulfide. 3 consecutive transmembrane segments (helical) span residues 250 to 270 (IGYFVIQTYLPCIMTVILSQV), 281 to 300 (ARTVFGVTTVLTMTTLSISA), and 312 to 332 (AMDWFIAVCYAFVFSALIEFA). The Cytoplasmic segment spans residues 333-420 (TVNYFTKRGW…FNSVSKIDRM (88 aa)). Residues 389-408 (KSATTPEPNKKPENKPAEAK) form a disordered region. The span at 396–408 (PNKKPENKPAEAK) shows a compositional bias: basic and acidic residues. The chain crosses the membrane as a helical span at residues 421–441 (SRIVFPVLFGTFNLVYWATYL). Over 442 to 451 (NREPVLGVSP) the chain is Extracellular.

It belongs to the ligand-gated ion channel (TC 1.A.9) family. Gamma-aminobutyric acid receptor (TC 1.A.9.5) subfamily. GABRA2 sub-subfamily. In terms of assembly, heteropentamer, formed by a combination of alpha (GABRA1-6), beta (GABRB1-3), gamma (GABRG1-3), delta (GABRD), epsilon (GABRE), rho (GABRR1-3), pi (GABRP) and theta (GABRQ) subunits, each subunit exhibiting distinct physiological and pharmacological properties. Binds UBQLN1. Interacts with KIF21B. Interacts with LHFPL4. Interacts with SHISA7; interaction leads to the regulation of GABA(A) receptor trafficking, channel deactivation kinetics and pharmacology. In terms of processing, glycosylated. In terms of tissue distribution, expressed in brain (at protein level).

Its subcellular location is the postsynaptic cell membrane. It is found in the cell membrane. It localises to the cytoplasmic vesicle membrane. The protein resides in the cell projection. The protein localises to the dendrite. The catalysed reaction is chloride(in) = chloride(out). Its activity is regulated as follows. Activated by pentobarbital. Inhibited by the antagonist bicuculline. Functionally, alpha subunit of the heteropentameric ligand-gated chloride channel gated by gamma-aminobutyric acid (GABA), a major inhibitory neurotransmitter in the brain. GABA-gated chloride channels, also named GABA(A) receptors (GABAAR), consist of five subunits arranged around a central pore and contain GABA active binding site(s) located at the alpha and beta subunit interface(s). When activated by GABA, GABAARs selectively allow the flow of chloride anions across the cell membrane down their electrochemical gradient. Chloride influx into the postsynaptic neuron following GABAAR opening decreases the neuron ability to generate a new action potential, thereby reducing nerve transmission. The alpha-2 subunit exhibits synaptogenic activity together with beta-2 and very little to no activity together with beta-3, the gamma-2 subunit being necessary but not sufficient to induce rapid synaptic contacts formation. The protein is Gamma-aminobutyric acid receptor subunit alpha-2 of Rattus norvegicus (Rat).